The chain runs to 902 residues: AAA+ ATPase ClpV1 (902 aa).

The region spanning 10–151 is the Clp R domain; the sequence is FGKLNSLAYK…KVEALTERFD (142 aa). Repeat stretches follow at residues 13–78 and 88–151; these read LNSL…LDRL and LSSH…ERFD. 237-244 lines the ATP pocket; sequence GEAGVGKT. Residues 441-559 adopt a coiled-coil conformation; that stretch reads AEVDDSRRRI…AQLSALQGEE (119 aa). An ATP-binding site is contributed by 640–647; the sequence is GTSGVGKT.

Belongs to the ClpA/ClpB family. In terms of assembly, interacts with TagJ.

Its subcellular location is the cytoplasm. Its function is as follows. Component of the H1 type VI (H1-T6SS) secretion system that plays a role in the release of toxins targeting both eukaryotic and prokaryotic species. Acts as an AAA(+) ATPase that disassembles the contracted sheath, which resets the systems for reassembly of an extended sheath that is ready to fire again. The protein is AAA+ ATPase ClpV1 (clpV1) of Pseudomonas aeruginosa (strain ATCC 15692 / DSM 22644 / CIP 104116 / JCM 14847 / LMG 12228 / 1C / PRS 101 / PAO1).